Reading from the N-terminus, the 443-residue chain is Na(+)-translocating NADH-quinone reductase subunit A (443 aa).

It belongs to the NqrA family. As to quaternary structure, composed of six subunits; NqrA, NqrB, NqrC, NqrD, NqrE and NqrF.

It catalyses the reaction a ubiquinone + n Na(+)(in) + NADH + H(+) = a ubiquinol + n Na(+)(out) + NAD(+). In terms of biological role, NQR complex catalyzes the reduction of ubiquinone-1 to ubiquinol by two successive reactions, coupled with the transport of Na(+) ions from the cytoplasm to the periplasm. NqrA to NqrE are probably involved in the second step, the conversion of ubisemiquinone to ubiquinol. The protein is Na(+)-translocating NADH-quinone reductase subunit A of Mannheimia succiniciproducens (strain KCTC 0769BP / MBEL55E).